Reading from the N-terminus, the 184-residue chain is MGRPGSQPNEAQPPPVQVQPTVNRDNQVHSQNGAIGQANIQTGRPVNNQTQNLWSSDLFDCMNDSENAVITCLAPCVTLGQIAEIVDEGATPCATGGLLYGMIFFIGVPFVYSCMFRAKMRNKYGLPDAPAPDWITHLFCEHCALCQEYRELKHRGFDPNIGWAGNVQAQQPVMSPPTGQRMMG.

Over residues 1–10 (MGRPGSQPNE) the composition is skewed to polar residues. The tract at residues 1-21 (MGRPGSQPNEAQPPPVQVQPT) is disordered. Residues 96 to 116 (GGLLYGMIFFIGVPFVYSCMF) traverse the membrane as a helical segment.

Belongs to the cornifelin family.

It is found in the membrane. Its function is as follows. May be involved in heavy metals transport. This chain is Protein PLANT CADMIUM RESISTANCE 4 (PCR4), found in Arabidopsis thaliana (Mouse-ear cress).